Here is a 496-residue protein sequence, read N- to C-terminus: GTPase Der (496 aa).

2 consecutive EngA-type G domains span residues 3-168 (PIIA…VPEK) and 210-383 (IKLA…DCST). GTP-binding positions include 9 to 16 (GRPNVGKS), 56 to 60 (DTGGI), 120 to 123 (NKID), 216 to 223 (GRPNVGKS), 263 to 267 (DTAGV), and 328 to 331 (NKWD). The KH-like domain maps to 384–468 (KRINTSLLTR…PIRIQFKESE (85 aa)).

The protein belongs to the TRAFAC class TrmE-Era-EngA-EngB-Septin-like GTPase superfamily. EngA (Der) GTPase family. In terms of assembly, associates with the 50S ribosomal subunit.

Its function is as follows. GTPase that plays an essential role in the late steps of ribosome biogenesis. This is GTPase Der from Hamiltonella defensa subsp. Acyrthosiphon pisum (strain 5AT).